We begin with the raw amino-acid sequence, 329 residues long: MAQSTLYSRVLGTGSYLPPDRVTNQQLTDRLAKEGIETSDEWIVARTGIHARHFAAPDVTTSDLALEASRRAIEAAGVDPQSIDLIIVATSTPDFVFPSTACLLQNKLGIKNGGAAFDVQAVCSGFAYAMATADSFIRSGQHRTALIVGAETFSRILDFKDRTTCVLFGDGAGAVILSASEEPGVLGSALHADGSYSNILCTPGNVNRGVIDGSVFLHMDGQAVFKLAVNVLEKVAIEALAKANLAPEQIDWLIPHQANIRIMTSTCRKLGLPQERMVVTVDQHGNTSAASIPLALDAAVRDGRIQRGQHVLIEGVGGGFTWGASVFRF.

Active-site residues include Cys123 and His256. Positions 257–261 (QANIR) are ACP-binding. Asn286 is a catalytic residue.

This sequence belongs to the thiolase-like superfamily. FabH family. In terms of assembly, homodimer.

The protein localises to the cytoplasm. It carries out the reaction malonyl-[ACP] + acetyl-CoA + H(+) = 3-oxobutanoyl-[ACP] + CO2 + CoA. It participates in lipid metabolism; fatty acid biosynthesis. In terms of biological role, catalyzes the condensation reaction of fatty acid synthesis by the addition to an acyl acceptor of two carbons from malonyl-ACP. Catalyzes the first condensation reaction which initiates fatty acid synthesis and may therefore play a role in governing the total rate of fatty acid production. Possesses both acetoacetyl-ACP synthase and acetyl transacylase activities. Its substrate specificity determines the biosynthesis of branched-chain and/or straight-chain of fatty acids. This Burkholderia orbicola (strain AU 1054) protein is Beta-ketoacyl-[acyl-carrier-protein] synthase III.